A 311-amino-acid chain; its full sequence is Probable dihydroorotate dehydrogenase A (fumarate) (311 aa).

Residues K45, 69–73 (NSMGL), and N128 contribute to the substrate site. 45-46 (KT) is a binding site for FMN. N128 is a binding site for FMN. C131 (nucleophile) is an active-site residue. FMN-binding residues include K165 and V193. 194 to 195 (NS) contributes to the substrate binding site. Residues G220, 248-249 (GG), and 270-271 (GT) contribute to the FMN site.

The protein belongs to the dihydroorotate dehydrogenase family. Type 1 subfamily. Homodimer. FMN serves as cofactor.

The protein localises to the cytoplasm. It catalyses the reaction (S)-dihydroorotate + fumarate = orotate + succinate. It participates in pyrimidine metabolism; UMP biosynthesis via de novo pathway. Its function is as follows. Catalyzes the conversion of dihydroorotate to orotate with fumarate as the electron acceptor. This Streptococcus pneumoniae serotype 4 (strain ATCC BAA-334 / TIGR4) protein is Probable dihydroorotate dehydrogenase A (fumarate) (pyrDA).